The chain runs to 356 residues: Acyl-coenzyme A diphosphatase NUDT19 (356 aa).

In terms of domain architecture, Nudix hydrolase spans 10–241 (AATVMLAAGW…IWLAPPQFYE (232 aa)). The segment at 72-94 (PRFGLGPEPPRQPPFPGLSHGDA) is disordered. A compositionally biased stretch (pro residues) spans 78-87 (PEPPRQPPFP). The Nudix box motif lies at 97 to 118 (AALPDDVALRICAIRETFEEAG). Residues E112 and E116 each coordinate Mg(2+). At K299 the chain carries N6-succinyllysine. A Microbody targeting signal motif is present at residues 354-356 (ARL).

Belongs to the Nudix hydrolase family. As to quaternary structure, monomer. Mg(2+) is required as a cofactor. The cofactor is Mn(2+).

The protein resides in the peroxisome. The catalysed reaction is an acyl-CoA + H2O = an acyl-4'-phosphopantetheine + adenosine 3',5'-bisphosphate + 2 H(+). It catalyses the reaction CoA + H2O = (R)-4'-phosphopantetheine + adenosine 3',5'-bisphosphate + 2 H(+). It carries out the reaction hexanoyl-CoA + H2O = hexanoyl-4'-phosphopantetheine + adenosine 3',5'-bisphosphate + 2 H(+). The enzyme catalyses octanoyl-CoA + H2O = S-octanoyl-4'-phosphopantetheine + adenosine 3',5'-bisphosphate + 2 H(+). The catalysed reaction is butanoyl-CoA + H2O = S-butanoyl-4'-phosphopantetheine + adenosine 3',5'-bisphosphate + 2 H(+). It catalyses the reaction propanoyl-CoA + H2O = propanoyl-4'-phosphopantetheine + adenosine 3',5'-bisphosphate + 2 H(+). It carries out the reaction malonyl-CoA + H2O = malonyl-4'-phosphopantetheine + adenosine 3',5'-bisphosphate + 2 H(+). The enzyme catalyses succinyl-CoA + H2O = succinyl-4'-phosphopantetheine + adenosine 3',5'-bisphosphate + 2 H(+). The catalysed reaction is choloyl-CoA + H2O = S-choloyl-4'-phosphopantetheine + adenosine 3',5'-bisphosphate + 2 H(+). It catalyses the reaction 4,8-dimethylnonanoyl-CoA + H2O = S-(4,8-dimethylnonanoyl)-4'-phosphopantetheine + adenosine 3',5'-bisphosphate + 2 H(+). It carries out the reaction (9Z,12Z,15Z)-octadecatrienoyl-CoA + H2O = S-(9Z,12Z,15Z-octadecatrienoyl)-4'-phosphopantetheine + adenosine 3',5'-bisphosphate + 2 H(+). The enzyme catalyses (9Z,12Z)-octadecadienoyl-CoA + H2O = S-(9Z,12Z-octadecadienoyl)-4'-phosphopantetheine + adenosine 3',5'-bisphosphate + 2 H(+). The catalysed reaction is (9Z)-hexadecenoyl-CoA + H2O = S-(9Z-hexadecenoyl)-4'-phosphopantetheine + adenosine 3',5'-bisphosphate + 2 H(+). It catalyses the reaction (9Z)-tetradecenoyl-CoA + H2O = S-(9Z-tetradecenoyl)-4'-phosphopantetheine + adenosine 3',5'-bisphosphate + 2 H(+). It carries out the reaction (6Z)-octenoyl-CoA + H2O = S-(6Z-octenoyl)-4'-phosphopantetheine + adenosine 3',5'-bisphosphate + 2 H(+). The enzyme catalyses hexadecanoyl-CoA + H2O = S-hexadecanoyl-4'-phosphopantetheine + adenosine 3',5'-bisphosphate + 2 H(+). The catalysed reaction is tetradecanoyl-CoA + H2O = tetradecanoyl-4'-phosphopantetheine + adenosine 3',5'-bisphosphate + 2 H(+). It catalyses the reaction dodecanoyl-CoA + H2O = S-dodecanoyl-4'-phosphopantetheine + adenosine 3',5'-bisphosphate + 2 H(+). It carries out the reaction a 5'-end CoA-ribonucleoside in mRNA + H2O = a 5'-end phospho-adenosine-phospho-ribonucleoside in mRNA + (R)-4'-phosphopantetheine + 2 H(+). In terms of biological role, fatty acyl-coenzyme A (CoA) diphosphatase that hydrolyzes fatty acyl-CoA to yield acyl-4'-phosphopantetheine and adenosine 3',5'-bisphosphate. Mediates the hydrolysis of a wide range of CoA esters, including choloyl-CoA and branched-chain fatty-acyl-CoA esters and at low substrate concentrations medium and long-chain fatty-acyl-CoA esters are the primary substrates. Highest activity seen with medium-chain acyl-CoA esters and higher rates of activity seen with the unsaturated acyl-CoA esters compared with the saturated esters. Exhibits decapping activity towards dpCoA-capped RNAs in vitro. This is Acyl-coenzyme A diphosphatase NUDT19 (Nudt19) from Mus saxicola (Brown spiny mouse).